The primary structure comprises 296 residues: Glycine--tRNA ligase alpha subunit (296 aa).

It belongs to the class-II aminoacyl-tRNA synthetase family. Tetramer of two alpha and two beta subunits.

The protein localises to the cytoplasm. The enzyme catalyses tRNA(Gly) + glycine + ATP = glycyl-tRNA(Gly) + AMP + diphosphate. This Desulfitobacterium hafniense (strain DSM 10664 / DCB-2) protein is Glycine--tRNA ligase alpha subunit.